The following is a 313-amino-acid chain: MAEASPQPGRYFCHCCSVEIVPRLPDYICPRCESGFIEELPEETRNTENGSAPSTAPTDQNRQPFENVDQHLFTLPQGYSQFAFGIFDDSFEIPTFPPGAQADDGRDPESRREREHQSRHRYGARQPRARLTARRATGRHEGVPTLEGIIQQLVNGIISPAAVPSLGLGPWGVLHSNPMDYAWGANGLDTIITQLLNQFENTGPPPADKEKIQALPTVPVTEEHVGSGLECPVCKEDYALGESVRQLPCNHLFHDSCIVPWLEQHDSCPVCRKSLTGQNTATNPPGLTGVGFSSSSSSSSSSSPSNENATSNS.

Ala2 carries the post-translational modification N-acetylalanine. Ser5 is subject to Phosphoserine. Positions 5-100 (SPQPGRYFCH…FEIPTFPPGA (96 aa)) are required for interaction with BAG6. Positions 13, 16, 29, and 32 each coordinate Zn(2+). The segment at 13–32 (CHCCSVEIVPRLPDYICPRC) adopts a C4-type zinc-finger fold. Disordered stretches follow at residues 42–63 (EETR…QNRQ) and 95–128 (TFPP…RQPR). Residues 47 to 63 (TENGSAPSTAPTDQNRQ) show a composition bias toward polar residues. A compositionally biased stretch (basic and acidic residues) spans 103–116 (DDGRDPESRREREH). The span at 117-128 (QSRHRYGARQPR) shows a compositional bias: basic residues. The segment at 202 to 306 (TGPPPADKEK…SSSSSSSPSN (105 aa)) is sufficient for interaction with AICDA. An RING-type zinc finger spans residues 231–272 (CPVCKEDYALGESVRQLPCNHLFHDSCIVPWLEQHDSCPVCR). Residues 279-313 (NTATNPPGLTGVGFSSSSSSSSSSSPSNENATSNS) form a disordered region. Over residues 293–313 (SSSSSSSSSSSPSNENATSNS) the composition is skewed to low complexity.

Interacts with CCDC50, EGFR, FLT3 and SCAMP3. Interacts with BAG6 (via ubiquitin-like domain); required for BAG6-dependent ubiquitination of proteins mislocalized to the cytosol. Interacts with CDKN1A. Interacts with AICDA. Post-translationally, ubiquitinated. May undergo autoubiquitination. In terms of tissue distribution, detected in B-cells (at protein level).

It is found in the cytoplasm. The protein localises to the nucleus. The enzyme catalyses S-ubiquitinyl-[E2 ubiquitin-conjugating enzyme]-L-cysteine + [acceptor protein]-L-lysine = [E2 ubiquitin-conjugating enzyme]-L-cysteine + N(6)-ubiquitinyl-[acceptor protein]-L-lysine.. It participates in protein modification; protein ubiquitination. Functionally, E3 ubiquitin-protein ligase that mediates ubiquitination oF target proteins. Depending on the associated E2 ligase, mediates 'Lys-27'-, 'Lys-29'-, 'Lys-48'- and/or 'Lys-63'-linked polyubiquitination of substrates. Part of a BAG6-dependent quality control process ensuring that proteins of the secretory pathway that are mislocalized to the cytosol are degraded by the proteasome. Probably acts by providing the ubiquitin ligase activity associated with the BAG6 complex and be responsible for ubiquitination of the hydrophobic mislocalized proteins and their targeting to the proteasome. May also play a role in the endosomal recycling of IGF2R, the cation-independent mannose-6-phosphate receptor. May play a role in the endosomal sorting and degradation of several membrane receptors including EGFR, FLT3, MET and CXCR4, by mediating their ubiquitination. By ubiquitinating CDKN1A/p21 and targeting it for degradation, may also promote cell proliferation. May monoubiquitinate AICDA. Acts as a regulator of DNA repair by mediating 'Lys-27'- and 'Lys-29'-linked polyubiquitination of MRE11, thereby promoting the exonuclease activity of MRE11. This Mus musculus (Mouse) protein is E3 ubiquitin-protein ligase RNF126.